Here is a 185-residue protein sequence, read N- to C-terminus: Transmembrane protein 252 (185 aa).

The next 2 helical transmembrane spans lie at 8 to 28 (VLCALSLLTGFLMICLGGFFI) and 39 to 59 (LVVAYVLLPLGFVILLSGIFW). Residues 125–149 (YTETSLEPQDKDKNDPQPEAPPPYP) form a disordered region.

It localises to the membrane. The chain is Transmembrane protein 252 (Tmem252) from Rattus norvegicus (Rat).